Consider the following 194-residue polypeptide: Holliday junction branch migration complex subunit RuvA (194 aa).

The domain I stretch occupies residues 1-64 (MIGRLRGILA…EDSVSLYGFL (64 aa)). A domain II region spans residues 65–140 (REGERRLFRD…RAADFSSGAP (76 aa)). Residues 140–144 (PITGQ) form a flexible linker region. The tract at residues 145–194 (LGPDAISEATVALQQLGYKPAEAARMARDAGAEGGEVATVIRKALQAALR) is domain III.

Belongs to the RuvA family. As to quaternary structure, homotetramer. Forms an RuvA(8)-RuvB(12)-Holliday junction (HJ) complex. HJ DNA is sandwiched between 2 RuvA tetramers; dsDNA enters through RuvA and exits via RuvB. An RuvB hexamer assembles on each DNA strand where it exits the tetramer. Each RuvB hexamer is contacted by two RuvA subunits (via domain III) on 2 adjacent RuvB subunits; this complex drives branch migration. In the full resolvosome a probable DNA-RuvA(4)-RuvB(12)-RuvC(2) complex forms which resolves the HJ.

Its subcellular location is the cytoplasm. Its function is as follows. The RuvA-RuvB-RuvC complex processes Holliday junction (HJ) DNA during genetic recombination and DNA repair, while the RuvA-RuvB complex plays an important role in the rescue of blocked DNA replication forks via replication fork reversal (RFR). RuvA specifically binds to HJ cruciform DNA, conferring on it an open structure. The RuvB hexamer acts as an ATP-dependent pump, pulling dsDNA into and through the RuvAB complex. HJ branch migration allows RuvC to scan DNA until it finds its consensus sequence, where it cleaves and resolves the cruciform DNA. The polypeptide is Holliday junction branch migration complex subunit RuvA (Xanthomonas oryzae pv. oryzae (strain MAFF 311018)).